The following is a 472-amino-acid chain: 12S seed storage protein CRA1 (472 aa).

The first 24 residues, 1–24, serve as a signal peptide directing secretion; that stretch reads MARVSSLLSFCLTLLILFHGYAAQ. 2 cysteine pairs are disulfide-bonded: cysteine 36–cysteine 69 and cysteine 112–cysteine 289. Residues 41–236 enclose the Cupin type-1 1 domain; sequence LNALEPSHVL…ALKIDLQTAQ (196 aa). Threonine 115 is modified (phosphothreonine). Residues 259 to 283 are disordered; it reads RPPLRGQRPQEEEEEEGRHGRHGNG. Residues 295–444 form the Cupin type-1 2 domain; it reads DNLDDPSRAD…GFQISPEEAR (150 aa). Tyrosine 312 carries the phosphotyrosine modification. Serine 314 bears the Phosphoserine mark. Phosphothreonine is present on residues threonine 408 and threonine 433.

It belongs to the 11S seed storage protein (globulins) family. As to quaternary structure, hexamer; each subunit is composed of an acidic and a basic chain derived from a single precursor and linked by a disulfide bond. Phosphorylated in seeds on some Tyr residues in response to abscisic acid (ABA). Post-translationally, proteolytically processed during seed maturation at a conserved Asn-Gly peptide bond by an asparaginyl endopeptidase to produce two mature polypeptides referred to as alpha and beta subunits that are joined together by a disulfide bond. In terms of tissue distribution, accumulates in seeds 8 days after anthesis.

It is found in the protein storage vacuole. In terms of biological role, seed storage protein. This is 12S seed storage protein CRA1 (CRA1) from Arabidopsis thaliana (Mouse-ear cress).